The chain runs to 293 residues: Large ribosomal subunit protein uL4c (293 aa).

Residues 1-50 (MATSTSSSLSLSFFSSSLFSSKSRNFSSKPILKLPSSSHSQTSLSLSIKS) constitute a chloroplast transit peptide. Disordered stretches follow at residues 107–138 (EVRG…PGGG) and 259–293 (YGVD…EPAE). Positions 116–126 (YPQKKTGRARR) are enriched in basic residues. Residues 263–293 (TLEDEDEEEEEEEEGEEVDDGVEDGTPEPAE) are compositionally biased toward acidic residues.

Belongs to the universal ribosomal protein uL4 family. As to quaternary structure, component of the chloroplast large ribosomal subunit (LSU). Mature 70S chloroplast ribosomes of higher plants consist of a small (30S) and a large (50S) subunit. The 30S small subunit contains 1 molecule of ribosomal RNA (16S rRNA) and 24 different proteins. The 50S large subunit contains 3 rRNA molecules (23S, 5S and 4.5S rRNA) and 33 different proteins. Highly expressed in cotyledon and weakly in roots.

The protein localises to the plastid. Its subcellular location is the chloroplast. Functionally, component of the chloroplast ribosome (chloro-ribosome), a dedicated translation machinery responsible for the synthesis of chloroplast genome-encoded proteins, including proteins of the transcription and translation machinery and components of the photosynthetic apparatus. The polypeptide is Large ribosomal subunit protein uL4c (RPL4) (Spinacia oleracea (Spinach)).